Consider the following 758-residue polypeptide: 5-methyltetrahydropteroyltriglutamate--homocysteine methyltransferase (758 aa).

5-methyltetrahydropteroyltri-L-glutamate contacts are provided by residues 16–19 (RELK) and Lys-112. L-homocysteine-binding positions include 433-435 (IGS) and Glu-486. Residues 433 to 435 (IGS) and Glu-486 each bind L-methionine. 5-methyltetrahydropteroyltri-L-glutamate is bound by residues 517 to 518 (RC) and Trp-563. Residue Asp-601 participates in L-homocysteine binding. Asp-601 is an L-methionine binding site. Glu-607 contacts 5-methyltetrahydropteroyltri-L-glutamate. Positions 643, 645, and 667 each coordinate Zn(2+). His-696 serves as the catalytic Proton donor. Residue Cys-728 coordinates Zn(2+).

It belongs to the vitamin-B12 independent methionine synthase family. It depends on Zn(2+) as a cofactor.

It carries out the reaction 5-methyltetrahydropteroyltri-L-glutamate + L-homocysteine = tetrahydropteroyltri-L-glutamate + L-methionine. It participates in amino-acid biosynthesis; L-methionine biosynthesis via de novo pathway; L-methionine from L-homocysteine (MetE route): step 1/1. Catalyzes the transfer of a methyl group from 5-methyltetrahydrofolate to homocysteine resulting in methionine formation. This is 5-methyltetrahydropteroyltriglutamate--homocysteine methyltransferase from Neisseria meningitidis serogroup A / serotype 4A (strain DSM 15465 / Z2491).